The chain runs to 270 residues: Fluoride-specific ion channel FluC 1 (270 aa).

4 consecutive transmembrane segments (helical) span residues I4–L24, L35–Y55, I67–V87, and A96–L116. Na(+)-binding residues include G74 and S77.

This sequence belongs to the fluoride channel Fluc/FEX (TC 1.A.43) family.

It localises to the cell inner membrane. The catalysed reaction is fluoride(in) = fluoride(out). Na(+) is not transported, but it plays an essential structural role and its presence is essential for fluoride channel function. Functionally, fluoride-specific ion channel. Important for reducing fluoride concentration in the cell, thus reducing its toxicity. This chain is Fluoride-specific ion channel FluC 1, found in Brucella abortus biovar 1 (strain 9-941).